The following is a 266-amino-acid chain: 15-hydroxyprostaglandin dehydrogenase [NAD(+)] (266 aa).

NAD(+) is bound by residues 12-20 (GAAQGIGRA), 36-37 (DW), 63-65 (CDV), and asparagine 91. The substrate site is built by serine 138 and glutamine 148. The Proton acceptor role is filled by tyrosine 151. NAD(+) contacts are provided by residues 151–155 (YCASK) and 186–188 (VNT).

The protein belongs to the short-chain dehydrogenases/reductases (SDR) family. As to quaternary structure, homodimer. Detected in colon epithelium (at protein level).

The protein localises to the cytoplasm. The catalysed reaction is prostaglandin E2 + NAD(+) = 15-oxoprostaglandin E2 + NADH + H(+). It carries out the reaction (15S)-hydroxy-(5Z,8Z,11Z,13E)-eicosatetraenoate + NAD(+) = 15-oxo-(5Z,8Z,11Z,13E)-eicosatetraenoate + NADH + H(+). It catalyses the reaction (11R)-hydroxy-(5Z,8Z,12E,14Z)-eicosatetraenoate + NAD(+) = 11-oxo-(5Z,8Z,12E,14Z)-eicosatetraenoate + NADH + H(+). The enzyme catalyses lipoxin A4 + NAD(+) = 15-oxo-(5S,6R)-dihydroxy-(7E,9E,11Z,13E)-eicosatetraenoate + NADH + H(+). The catalysed reaction is 15-oxo-(5S,6R)-dihydroxy-(7E,9E,11Z)-eicosatrienoate + NADH + H(+) = (5S,6R,15S)-trihydroxy-(7E,9E,11Z)-eicosatrienoate + NAD(+). It carries out the reaction prostaglandin A1 + NAD(+) = 15-oxo-prostaglandin A1 + NADH + H(+). It catalyses the reaction prostaglandin E1 + NAD(+) = 15-oxoprostaglandin E1 + NADH + H(+). The enzyme catalyses 14-hydroxy-(4Z,7Z,10Z,12E,16Z,19Z)-docosahexaenoate + NAD(+) = 14-oxo-(4Z,7Z,10Z,12E,16Z,19Z)-docosahexaenoate + NADH + H(+). The catalysed reaction is resolvin E1 + NAD(+) = 18-oxo-resolvin E1 + NADH + H(+). It carries out the reaction resolvin D1 + NAD(+) = 8-oxoresolvin D1 + NADH + H(+). It catalyses the reaction resolvin D1 + NAD(+) = 17-oxoresolvin D1 + NADH + H(+). The enzyme catalyses resolvin D2 + NAD(+) = 7-oxoresolvin D2 + NADH + H(+). The catalysed reaction is resolvin D2 + NAD(+) = 16-oxoresolvin D2 + NADH + H(+). Catalyzes the NAD-dependent dehydrogenation (oxidation) of a broad array of hydroxylated polyunsaturated fatty acids (mainly eicosanoids and docosanoids, including prostaglandins, lipoxins and resolvins), yielding their corresponding keto (oxo) metabolites. Decreases the levels of the pro-proliferative prostaglandins such as prostaglandin E2 (whose activity is increased in cancer because of an increase in the expression of cyclooxygenase 2) and generates oxo-fatty acid products that can profoundly influence cell function by abrogating pro-inflammatory cytokine expression. Converts resolvins E1, D1 and D2 to their oxo products, which represents a mode of resolvin inactivation. Resolvin E1 plays important roles during the resolution phase of acute inflammation, while resolvins D1 and D2 have a unique role in obesity-induced adipose inflammation. This Homo sapiens (Human) protein is 15-hydroxyprostaglandin dehydrogenase [NAD(+)].